The sequence spans 176 residues: Trypsin inhibitor 1B (176 aa).

2 cysteine pairs are disulfide-bonded: Cys39–Cys83 and Cys132–Cys143.

It belongs to the protease inhibitor I3 (leguminous Kunitz-type inhibitor) family.

Its function is as follows. Inhibits trypsin stoichiometrically. In Erythrina variegata (Indian coral tree), this protein is Trypsin inhibitor 1B.